The sequence spans 385 residues: 1-deoxy-D-xylulose 5-phosphate reductoisomerase (385 aa).

6 residues coordinate NADPH: Thr-10, Gly-11, Ser-12, Ile-13, Lys-37, and Asn-124. Residue Lys-125 participates in 1-deoxy-D-xylulose 5-phosphate binding. Position 126 (Glu-126) interacts with NADPH. Asp-150 serves as a coordination point for Mn(2+). The 1-deoxy-D-xylulose 5-phosphate site is built by Ser-151, Glu-152, Ser-176, and His-199. Glu-152 provides a ligand contact to Mn(2+). Gly-205 contributes to the NADPH binding site. Positions 212, 217, 218, and 221 each coordinate 1-deoxy-D-xylulose 5-phosphate. Mn(2+) is bound at residue Glu-221.

It belongs to the DXR family. It depends on Mg(2+) as a cofactor. The cofactor is Mn(2+).

The catalysed reaction is 2-C-methyl-D-erythritol 4-phosphate + NADP(+) = 1-deoxy-D-xylulose 5-phosphate + NADPH + H(+). The protein operates within isoprenoid biosynthesis; isopentenyl diphosphate biosynthesis via DXP pathway; isopentenyl diphosphate from 1-deoxy-D-xylulose 5-phosphate: step 1/6. Its function is as follows. Catalyzes the NADPH-dependent rearrangement and reduction of 1-deoxy-D-xylulose-5-phosphate (DXP) to 2-C-methyl-D-erythritol 4-phosphate (MEP). This is 1-deoxy-D-xylulose 5-phosphate reductoisomerase from Clostridium botulinum (strain ATCC 19397 / Type A).